An 809-amino-acid chain; its full sequence is Valine--tRNA ligase (809 aa).

Residues Pro-60–His-70 carry the 'HIGH' region motif. A 'KMSKS' region motif is present at residues Arg-546–Ser-550. Lys-549 contributes to the ATP binding site.

The protein belongs to the class-I aminoacyl-tRNA synthetase family. ValS type 2 subfamily.

It localises to the cytoplasm. It catalyses the reaction tRNA(Val) + L-valine + ATP = L-valyl-tRNA(Val) + AMP + diphosphate. Functionally, catalyzes the attachment of valine to tRNA(Val). As ValRS can inadvertently accommodate and process structurally similar amino acids such as threonine, to avoid such errors, it has a 'posttransfer' editing activity that hydrolyzes mischarged Thr-tRNA(Val) in a tRNA-dependent manner. This Sulfurisphaera tokodaii (strain DSM 16993 / JCM 10545 / NBRC 100140 / 7) (Sulfolobus tokodaii) protein is Valine--tRNA ligase.